We begin with the raw amino-acid sequence, 387 residues long: 3-ketoacyl-CoA thiolase (387 aa).

Cys91 acts as the Acyl-thioester intermediate in catalysis. Active-site proton acceptor residues include His343 and Cys373.

It belongs to the thiolase-like superfamily. Thiolase family. As to quaternary structure, heterotetramer of two alpha chains (FadB) and two beta chains (FadA).

Its subcellular location is the cytoplasm. It carries out the reaction an acyl-CoA + acetyl-CoA = a 3-oxoacyl-CoA + CoA. Its pathway is lipid metabolism; fatty acid beta-oxidation. Its function is as follows. Catalyzes the final step of fatty acid oxidation in which acetyl-CoA is released and the CoA ester of a fatty acid two carbons shorter is formed. The protein is 3-ketoacyl-CoA thiolase of Yersinia pseudotuberculosis serotype O:1b (strain IP 31758).